Reading from the N-terminus, the 1189-residue chain is Origin recognition complex subunit 1 (1189 aa).

The tract at residues 1-53 (MTPKKKIFQNFQANDNEILSPTKKGIKLNVSKLNILNFENTIITKEKTNYEYK) is required for peripherial nuclear localization. Position 2 is a phosphothreonine (T2). Position 20 is a phosphoserine (S20). 4 Leucine heptad repeat repeats span residues 137-143 (LTNISSS), 144-150 (LTNISSS), 151-157 (LTNISSS), and 158-164 (LSNSLDE). Basic residues predominate over residues 239-248 (KKNISKKNTH). Disordered stretches follow at residues 239–421 (KKNI…DHTD) and 679–749 (DTQA…QSSL). Residues 254 to 279 (QNDKNKEKNKEKDKNIKKDRDKDIQT) show a composition bias toward basic and acidic residues. Residues 304 to 320 (NNDNVKNNLKNNINNNN) are compositionally biased toward low complexity. Residues 321-339 (TLKRSSQSVRIDSDLSSAH) are compositionally biased toward polar residues. Residues 353–381 (HRNNNNNNNNNNKTTSNNHNKNNKINNNN) show a composition bias toward low complexity. Basic and acidic residues predominate over residues 385 to 394 (NYKKQTDTKH). Residues 395-411 (TNNTQNNKYNKTKTTNT) are compositionally biased toward low complexity. The span at 695–709 (KAQTTTNVKANTHTK) shows a compositional bias: polar residues. 2 stretches are compositionally biased toward basic and acidic residues: residues 710-724 (TLNDHNKSKTTKNKE) and 733-742 (DVKKKSDPHN). ATP is bound by residues V780 and 815–823 (GMPGTGKTA). Residues D903 and E904 each coordinate Mg(2+). An ATP-binding site is contributed by E904. Positions 913-922 (QKVLFTLFDW) match the PIP-box motif. N937 and R1003 together coordinate ATP.

Belongs to the ORC1 family. As to quaternary structure, component of the origin recognition complex (ORC). Interacts (via PIP-box) with PCNA1; the interaction occurs during DNA replication in trophozoites. In schizonts, may be phosphorylated by PK5; phosphorylation leads to ORC1 dissociation from the telomeres and var gene promoters, translocation to the cytoplasm, where it is degraded by the proteasome.

It is found in the nucleus. The protein localises to the chromosome. It localises to the telomere. The protein resides in the nucleolus. It carries out the reaction ATP + H2O = ADP + phosphate + H(+). Component of the origin recognition complex (ORC) that binds origins of replication and thus may regulate the initiation of DNA replication. DNA-binding may not be ATP-dependent. In a SIR2A/Sir2-dependent manner, binds to and silences telomers and subtelomeric repeat regions (TAREs). In a SIR2A/Sir2-dependent manner, binds to promoters of var genes localized next to TAREs resulting in their silencing. The polypeptide is Origin recognition complex subunit 1 (Plasmodium falciparum (isolate 3D7)).